Consider the following 55-residue polypeptide: uncharacterized protein (55 aa).

This is an uncharacterized protein from Sulfolobus islandicus rod-shaped virus 1 (SIRV-1).